The primary structure comprises 336 residues: Putative transcription factor avaE (336 aa).

Positions 32-100 form a DNA-binding region, WRKY; sequence TATRLNQTTF…VPLDQNESMP (69 aa).

It localises to the nucleus. It functions in the pathway secondary metabolite biosynthesis. In terms of biological role, putative transcription factor; part of the cluster that mediates the biosynthesis of a highly modified cyclo-arginine-tryptophan dipeptide (cRW). This chain is Putative transcription factor avaE, found in Aspergillus versicolor.